Reading from the N-terminus, the 206-residue chain is Small ribosomal subunit protein uS4 (206 aa).

The 61-residue stretch at 96-156 (QRLDNVVYRM…EKAKKQARIV (61 aa)) folds into the S4 RNA-binding domain.

Belongs to the universal ribosomal protein uS4 family. Part of the 30S ribosomal subunit. Contacts protein S5. The interaction surface between S4 and S5 is involved in control of translational fidelity.

Functionally, one of the primary rRNA binding proteins, it binds directly to 16S rRNA where it nucleates assembly of the body of the 30S subunit. With S5 and S12 plays an important role in translational accuracy. This is Small ribosomal subunit protein uS4 from Alteromonas mediterranea (strain DSM 17117 / CIP 110805 / LMG 28347 / Deep ecotype).